The primary structure comprises 542 residues: Probable spastin homolog spas-1 (542 aa).

A coiled-coil region spans residues Arg-29–Glu-66. A disordered region spans residues Ala-131–Gln-177. A compositionally biased stretch (basic and acidic residues) spans Gly-135–Ser-169. Gly-309–Thr-316 serves as a coordination point for ATP.

It belongs to the AAA ATPase family. Spastin subfamily. As to quaternary structure, homohexamer. The homohexamer is stabilized by ATP-binding. The homohexamer may adopt a ring conformation through which microtubules pass prior to being severed. Interacts with microtubules.

It is found in the cytoplasm. Its subcellular location is the cytoskeleton. The protein localises to the perinuclear region. The catalysed reaction is n ATP + n H2O + a microtubule = n ADP + n phosphate + (n+1) alpha/beta tubulin heterodimers.. Functionally, severs microtubules, probably in an ATP-dependent fashion. The polypeptide is Probable spastin homolog spas-1 (spas-1) (Caenorhabditis briggsae).